A 243-amino-acid chain; its full sequence is Probable 2-phosphosulfolactate phosphatase (243 aa).

It belongs to the ComB family. Mg(2+) serves as cofactor.

It catalyses the reaction (2R)-O-phospho-3-sulfolactate + H2O = (2R)-3-sulfolactate + phosphate. The sequence is that of Probable 2-phosphosulfolactate phosphatase from Synechococcus sp. (strain CC9605).